A 649-amino-acid polypeptide reads, in one-letter code: FAS-associated factor 1 (649 aa).

The UBA domain occupies 1–57; the sequence is MASNMDREMILADFQACTGIENIDEAITLLEQNNWDLVAAINGVIPQENGILQSDFG. Disordered stretches follow at residues 56 to 84 and 266 to 290; these read FGGE…SAFR and RRTS…VSDS. The span at 68–82 shows a compositional bias: low complexity; sequence PASHPAPASTPSSSA. At Ser319 the chain carries Phosphoserine. A UBX domain is found at 568–645; it reads NAEPVSKLRI…NLFPQETLFL (78 aa). Residue Thr579 is modified to Phosphothreonine. Position 581 is a phosphoserine (Ser581).

Interacts with CDT1 and ATPase VCP/p97. Interacts (via UBA domain) with FAS (via death domain). Interacts (via UBA domain) with NLRP12 (via DAPIN/PYRIN domain).

The protein resides in the nucleus. Ubiquitin-binding protein. Required for the progression of DNA replication forks by targeting DNA replication licensing factor CDT1 for degradation. Potentiates but cannot initiate FAS-induced apoptosis. This is FAS-associated factor 1 (Faf1) from Mus musculus (Mouse).